The sequence spans 389 residues: Flap endonuclease 1 (389 aa).

The interval 1 to 105 is N-domain; it reads MGIKGLTALM…GELAKRKDKR (105 aa). A Mg(2+)-binding site is contributed by Asp34. Arg71 is a binding site for DNA. Residues Asp87, Glu159, Glu161, Asp180, and Asp182 each coordinate Mg(2+). The I-domain stretch occupies residues 123–254; that stretch reads EVEKLSKRTV…KTALKLIKEH (132 aa). Glu159 provides a ligand contact to DNA. DNA is bound by residues Gly232 and Asp234. Asp234 is a Mg(2+) binding site. An interaction with PCNA region spans residues 338–346; that stretch reads SQNRLESFF. A disordered region spans residues 356–389; it reads IGKRKVEEKKGKNGKAGLANKKSKGVSGFRRSKN.

It belongs to the XPG/RAD2 endonuclease family. FEN1 subfamily. As to quaternary structure, interacts with PCNA. Three molecules of FEN1 bind to one PCNA trimer with each molecule binding to one PCNA monomer. PCNA stimulates the nuclease activity without altering cleavage specificity. Requires Mg(2+) as cofactor. Post-translationally, phosphorylated. Phosphorylation upon DNA damage induces relocalization to the nuclear plasma.

The protein resides in the nucleus. Its subcellular location is the nucleolus. It is found in the nucleoplasm. The protein localises to the mitochondrion. Functionally, structure-specific nuclease with 5'-flap endonuclease and 5'-3' exonuclease activities involved in DNA replication and repair. During DNA replication, cleaves the 5'-overhanging flap structure that is generated by displacement synthesis when DNA polymerase encounters the 5'-end of a downstream Okazaki fragment. It enters the flap from the 5'-end and then tracks to cleave the flap base, leaving a nick for ligation. Also involved in the long patch base excision repair (LP-BER) pathway, by cleaving within the apurinic/apyrimidinic (AP) site-terminated flap. Acts as a genome stabilization factor that prevents flaps from equilibrating into structures that lead to duplications and deletions. Also possesses 5'-3' exonuclease activity on nicked or gapped double-stranded DNA, and exhibits RNase H activity. Also involved in replication and repair of rDNA and in repairing mitochondrial DNA. The chain is Flap endonuclease 1 from Ostreococcus lucimarinus (strain CCE9901).